The following is a 378-amino-acid chain: Probable serine/threonine-protein kinase PBL7 (378 aa).

Residues 1 to 49 (MGWIPCSGKSSGRNKTRRNGDHKLDRKSSDCSVSTSEKSRAKSSLSESK) form a disordered region. Glycine 2 carries the N-myristoyl glycine lipid modification. A compositionally biased stretch (basic and acidic residues) spans 18–29 (RNGDHKLDRKSS). Residues 32-47 (SVSTSEKSRAKSSLSE) show a composition bias toward low complexity. Threonine 62 is subject to Phosphothreonine. The 278-residue stretch at 73-350 (FRKECLIGEG…ADVVTALSYL (278 aa)) folds into the Protein kinase domain. Residues 79 to 87 (IGEGGFGRV) and lysine 102 contribute to the ATP site. At tyrosine 147 the chain carries Phosphotyrosine. The active-site Proton acceptor is aspartate 200. Phosphoserine occurs at positions 204 and 234. Residues threonine 235 and threonine 240 each carry the phosphothreonine modification. Position 248 is a phosphotyrosine (tyrosine 248).

Belongs to the protein kinase superfamily. Ser/Thr protein kinase family. Interacts with BSU1 and BSL1. Post-translationally, phosphorylated at Ser-43, Ser-46 and Ser-234. In terms of tissue distribution, widely expressed.

It is found in the cell membrane. It catalyses the reaction L-seryl-[protein] + ATP = O-phospho-L-seryl-[protein] + ADP + H(+). It carries out the reaction L-threonyl-[protein] + ATP = O-phospho-L-threonyl-[protein] + ADP + H(+). Its function is as follows. Serine/threonine-protein kinase involved in the positive regulation of brassinosteroid (BR) signaling and plant growth. Phosphorylates both BSU1 and BSL1 in vitro. This is Probable serine/threonine-protein kinase PBL7 from Arabidopsis thaliana (Mouse-ear cress).